Consider the following 312-residue polypeptide: tRNA pseudouridine synthase B (312 aa).

Catalysis depends on D49, which acts as the Nucleophile.

It belongs to the pseudouridine synthase TruB family. Type 1 subfamily.

It catalyses the reaction uridine(55) in tRNA = pseudouridine(55) in tRNA. In terms of biological role, responsible for synthesis of pseudouridine from uracil-55 in the psi GC loop of transfer RNAs. The chain is tRNA pseudouridine synthase B from Chelativorans sp. (strain BNC1).